Here is a 214-residue protein sequence, read N- to C-terminus: Outer-membrane lipoprotein LolB (214 aa).

The signal sequence occupies residues Met1–Gly25. Cys26 is lipidated: N-palmitoyl cysteine. Cys26 carries S-diacylglycerol cysteine lipidation.

The protein belongs to the LolB family. As to quaternary structure, monomer.

The protein resides in the cell outer membrane. Its function is as follows. Plays a critical role in the incorporation of lipoproteins in the outer membrane after they are released by the LolA protein. The sequence is that of Outer-membrane lipoprotein LolB from Shewanella oneidensis (strain ATCC 700550 / JCM 31522 / CIP 106686 / LMG 19005 / NCIMB 14063 / MR-1).